Here is a 358-residue protein sequence, read N- to C-terminus: MLLHFSPAKPLISPPNLRRNSPTFLISPPRSLRIRAIDAAQIFDYETQLKSEYRKSSALKIAVLGFGNFGQFLSKTLIRHGHDLITHSRSDYSDAANSIGARFFDNPHDLCEQHPDVVLLCTSILSTESVLRSFPFQRLRRSTLFVDVLSVKEFPKALFIKYLPKEFDILCTHPMFGPESGKHSWSGLPFVYDKVRIGDAASRQERCEKFLRIFENEGCKMVEMSCEKHDYYAAGSQFVTHTMGRVLEKYGVESSPINTKGYETLLDLVENTSSDSFELFYGLFMYNPNALEQLERLDMAFESVKKELFGRLHQQYRKQMFGGEVQSPKKTEQKLLNDGGVVPMNDISSSSSSSSSSS.

Residues Met1–Ala36 constitute a chloroplast transit peptide. The Prephenate/arogenate dehydrogenase domain maps to Leu59–Asp338. The interval Leu336–Ser358 is disordered. The span at Ser348–Ser358 shows a compositional bias: low complexity.

Belongs to the prephenate/arogenate dehydrogenase family. In terms of tissue distribution, expressed in roots, stems, leaves, flowers, siliques and seeds. More abundant in seeds.

The protein resides in the plastid. The protein localises to the chloroplast. It carries out the reaction L-arogenate + NADP(+) = L-tyrosine + CO2 + NADPH. Its pathway is amino-acid biosynthesis; L-tyrosine biosynthesis; L-tyrosine from L-arogenate (NADP(+) route): step 1/1. Functionally, involved in the biosynthesis of tyrosine. Has a weak prephenate dehydrogenase activity. The protein is Arogenate dehydrogenase 2, chloroplastic (TYRAAT2) of Arabidopsis thaliana (Mouse-ear cress).